The following is a 339-amino-acid chain: Putative agmatine deiminase (339 aa).

Residue Cys331 is the Amidino-cysteine intermediate of the active site.

It belongs to the agmatine deiminase family.

The enzyme catalyses agmatine + H2O = N-carbamoylputrescine + NH4(+). The polypeptide is Putative agmatine deiminase (Streptomyces coelicolor (strain ATCC BAA-471 / A3(2) / M145)).